The sequence spans 498 residues: MSNLPWLTLIVLFPFSASFLIPLLPYKGNKVVRWYTLGICALEFLLITFTFCCQFHLSDPSIQLKEDYNWISFLYFHWNLGVDGLSMGLILLTGFITTLAILAAWPVTRNVRLFYFLMLAMYSGQIGLFASQNILLFFFMWELELIPVYLLLSMWGGKKRLYSSTKFLLYTAGGSIFLLVGSLTMGLYGSNGTSFDLQILTNRSYPIAVETALYFSFLIAYAVKLPILPFHTWLPDTHGEAHYSTCMLLAGILLKMGGYGLIRINMELLPHAHFLFSPLLVTMGAVQIAYASLISFSLPNIKRRIAYSSVSHMGFVIIGISSITDIGTNGAILQMISHGLIGAALFFLAGISYDRTQTLYLDQLGGIAVPMPRLFTMFSFFSLASLALPGMSSFVAEFLIFLGIVTNPYYSLIFKSIILFIGAIGVILTPIYLLSMLRKMFYGFKIYQNSLFFIDLGPREIFISVFILLPILGIGIYPNLVLSLWNEKVESILLQYYG.

The next 14 helical transmembrane spans lie at 4-24 (LPWLTLIVLFPFSASFLIPLL), 37-57 (LGICALEFLLITFTFCCQFHL), 87-107 (MGLILLTGFITTLAILAAWPV), 111-131 (VRLFYFLMLAMYSGQIGLFAS), 134-154 (ILLFFFMWELELIPVYLLLSM), 167-187 (FLLYTAGGSIFLLVGSLTMGL), 207-227 (IAVETALYFSFLIAYAVKLPI), 242-262 (HYSTCMLLAGILLKMGGYGLI), 274-294 (FLFSPLLVTMGAVQIAYASLI), 305-325 (IAYSSVSHMGFVIIGISSITD), 331-351 (AILQMISHGLIGAALFFLAGI), 386-406 (LALPGMSSFVAEFLIFLGIVT), 417-437 (IILFIGAIGVILTPIYLLSML), and 461-481 (IFISVFILLPILGIGIYPNLV).

It belongs to the complex I subunit 4 family.

It localises to the plastid. The protein resides in the chloroplast thylakoid membrane. The catalysed reaction is a plastoquinone + NADH + (n+1) H(+)(in) = a plastoquinol + NAD(+) + n H(+)(out). It catalyses the reaction a plastoquinone + NADPH + (n+1) H(+)(in) = a plastoquinol + NADP(+) + n H(+)(out). The chain is NAD(P)H-quinone oxidoreductase chain 4, chloroplastic from Psilotum nudum (Whisk fern).